Reading from the N-terminus, the 580-residue chain is Peptidyl-prolyl cis-trans isomerase-like 2 (580 aa).

The 74-residue stretch at lysine 42 to lysine 115 folds into the U-box domain. Disordered stretches follow at residues isoleucine 182–serine 201, glutamine 227–serine 259, serine 439–proline 459, glutamine 479–threonine 530, and phenylalanine 553–aspartate 580. One can recognise a PPIase cyclophilin-type domain in the interval glutamine 309–isoleucine 468. The span at serine 439–proline 457 shows a compositional bias: polar residues. Positions glutamate 490–aspartate 507 are enriched in basic and acidic residues.

It belongs to the cyclophilin-type PPIase family. PPIL2 subfamily.

It is found in the nucleus. It catalyses the reaction [protein]-peptidylproline (omega=180) = [protein]-peptidylproline (omega=0). It carries out the reaction S-ubiquitinyl-[E2 ubiquitin-conjugating enzyme]-L-cysteine + [acceptor protein]-L-lysine = [E2 ubiquitin-conjugating enzyme]-L-cysteine + N(6)-ubiquitinyl-[acceptor protein]-L-lysine.. Its pathway is protein modification; protein ubiquitination. In terms of biological role, may catalyze the cis-trans isomerization of proline imidic peptide bonds in oligopeptides thereby assisting the folding of proteins. May also function as a chaperone, playing a role in intracellular transport of proteins. May also have a protein ubiquitin ligase activity acting as an E3 ubiquitin protein ligase or as a ubiquitin-ubiquitin ligase promoting elongation of ubiquitin chains on proteins. The sequence is that of Peptidyl-prolyl cis-trans isomerase-like 2 (cyp8) from Emericella nidulans (strain FGSC A4 / ATCC 38163 / CBS 112.46 / NRRL 194 / M139) (Aspergillus nidulans).